The chain runs to 142 residues: Large ribosomal subunit protein uL13 (142 aa).

It belongs to the universal ribosomal protein uL13 family. As to quaternary structure, part of the 50S ribosomal subunit.

This protein is one of the early assembly proteins of the 50S ribosomal subunit, although it is not seen to bind rRNA by itself. It is important during the early stages of 50S assembly. This is Large ribosomal subunit protein uL13 from Methylococcus capsulatus (strain ATCC 33009 / NCIMB 11132 / Bath).